Here is a 228-residue protein sequence, read N- to C-terminus: Cytochrome c oxidase subunit 2 (228 aa).

Residues Met1–His26 are Mitochondrial intermembrane-facing. A helical transmembrane segment spans residues Thr27–Asn48. At Lys49–Glu62 the chain is on the mitochondrial matrix side. The chain crosses the membrane as a helical span at residues Ile63 to Arg82. Residues Leu83–Asn228 lie on the Mitochondrial intermembrane side of the membrane. Residues His161, Cys196, Glu198, Cys200, His204, and Met207 each contribute to the Cu cation site. Glu198 is a Mg(2+) binding site.

The protein belongs to the cytochrome c oxidase subunit 2 family. Component of the cytochrome c oxidase (complex IV, CIV), a multisubunit enzyme composed of a catalytic core of 3 subunits and several supernumerary subunits. The complex exists as a monomer or a dimer and forms supercomplexes (SCs) in the inner mitochondrial membrane with ubiquinol-cytochrome c oxidoreductase (cytochrome b-c1 complex, complex III, CIII). Requires Cu cation as cofactor.

It localises to the mitochondrion inner membrane. The enzyme catalyses 4 Fe(II)-[cytochrome c] + O2 + 8 H(+)(in) = 4 Fe(III)-[cytochrome c] + 2 H2O + 4 H(+)(out). Functionally, component of the cytochrome c oxidase, the last enzyme in the mitochondrial electron transport chain which drives oxidative phosphorylation. The respiratory chain contains 3 multisubunit complexes succinate dehydrogenase (complex II, CII), ubiquinol-cytochrome c oxidoreductase (cytochrome b-c1 complex, complex III, CIII) and cytochrome c oxidase (complex IV, CIV), that cooperate to transfer electrons derived from NADH and succinate to molecular oxygen, creating an electrochemical gradient over the inner membrane that drives transmembrane transport and the ATP synthase. Cytochrome c oxidase is the component of the respiratory chain that catalyzes the reduction of oxygen to water. Electrons originating from reduced cytochrome c in the intermembrane space (IMS) are transferred via the dinuclear copper A center (CU(A)) of subunit 2 and heme A of subunit 1 to the active site in subunit 1, a binuclear center (BNC) formed by heme A3 and copper B (CU(B)). The BNC reduces molecular oxygen to 2 water molecules using 4 electrons from cytochrome c in the IMS and 4 protons from the mitochondrial matrix. The polypeptide is Cytochrome c oxidase subunit 2 (COII) (Aedes aegypti (Yellowfever mosquito)).